The chain runs to 101 residues: Small ribosomal subunit protein uS14 (101 aa).

Belongs to the universal ribosomal protein uS14 family. In terms of assembly, part of the 30S ribosomal subunit. Contacts proteins S3 and S10.

Its function is as follows. Binds 16S rRNA, required for the assembly of 30S particles and may also be responsible for determining the conformation of the 16S rRNA at the A site. In Stenotrophomonas maltophilia (strain K279a), this protein is Small ribosomal subunit protein uS14.